The primary structure comprises 1366 residues: Protein strawberry notch homolog 2 (1366 aa).

Disordered regions lie at residues 1-24 (MLAV…GSLL), 174-217 (QEQS…KQHP), 614-640 (STKR…KAPR), and 1324-1366 (HAGP…QAPL). The span at 15–24 (HEPPPAGSLL) shows a compositional bias: pro residues. Over residues 182–194 (PEEEDEAEEEEAE) the composition is skewed to acidic residues. Basic residues predominate over residues 614 to 637 (STKRKRDRGAGSKRKRRPRGRGAK). Positions 1333-1347 (LGEGAGAGGAAGGGP) are enriched in gly residues.

It belongs to the SBNO family. As to quaternary structure, interacts with TAL1; this interaction inhibits TAL1 occupancy of the DCSTAMP promoter, leading to the activation of the DCSTAMP promoter by the transcription factor MITF. In terms of tissue distribution, detected in macrophages. IL10 regulates expression in a STAT3-dependent way.

Acts as a transcriptional coregulator, that can have both coactivator and corepressor functions. Inhibits the DCSTAMP-repressive activity of TAL1, hence enhancing the access of the transcription factor MITF to the DC-STAMP promoter in osteoclast. Plays a role in bone homeostasis; required as a positive regulator in TNFSF11//RANKL-mediated osteoclast fusion via a DCSTAMP-dependent pathway. May also be required in the regulation of osteoblast differentiation. Involved in the transcriptional corepression of NF-kappaB in macrophages. Plays a role as a regulator in the pro-inflammatory cascade. The chain is Protein strawberry notch homolog 2 (SBNO2) from Homo sapiens (Human).